A 275-amino-acid chain; its full sequence is MENSSTPITGLAWISSVTLCPKTYNMIVATVEGASANFVKGFNQKSAVYLGYSTVPEGLEQVITDIQMLNEKTVLPVGYAFIGEHLDPKISVPKKKRLCVKQMPMHTAETAVCEIKLSMKSKQFGAPYERIGEISGLVFWCRKGSVSAPKPTPKPRNITSGIKGLSLDSNTAVQPVRRASAPNPDAGQAVPLSNGKWGLSENAIYDSSNIYGISAIDGIPFTIHPMFENTINNSSVAASDFRDLHIKTLSEIESEYNYGFVVEKTAAARIPPRLR.

The MABP domain maps to 5-145; sequence STPITGLAWI…GLVFWCRKGS (141 aa). The short motif at 151–156 is the SH3-binding element; sequence PTPKPR. The UMA domain occupies 216–267; that stretch reads IDGIPFTIHPMFENTINNSSVAASDFRDLHIKTLSEIESEYNYGFVVEKTAA.

The protein belongs to the MVB12 family. Component of the ESCRT-I complex (endosomal sorting complex required for transport I).

The protein localises to the cytoplasm. The protein resides in the endosome. It is found in the late endosome membrane. In terms of biological role, component of the ESCRT-I complex, a regulator of vesicular trafficking process. Required for the sorting of endocytic ubiquitinated cargos into multivesicular bodies. In Xenopus laevis (African clawed frog), this protein is Multivesicular body subunit 12A (mvb12a).